Reading from the N-terminus, the 316-residue chain is Retinol dehydrogenase 11 (316 aa).

The helical; Signal-anchor for type II membrane protein transmembrane segment at 1–21 (MFGFLLLLSLPFILYLVTPKI) threads the bilayer. The Cytoplasmic segment spans residues 22–316 (RKMLSSGVCT…CDLLGLPVDW (295 aa)). Residue 45–51 (GANTGIG) participates in NADP(+) binding. Position 109 is an N6-acetyllysine (Lys109). Position 174 (Ser174) interacts with substrate. Tyr199 functions as the Proton acceptor in the catalytic mechanism.

The protein belongs to the short-chain dehydrogenases/reductases (SDR) family. Post-translationally, not glycosylated. Expressed at high level in liver and testis. Expressed at lower levels in smooth muscle, thymus, submaxillary gland and epididymis. In testis, expression is restricted to pachytene spermatocytes. Also expressed in four layers of the retina, including the outer segment of rods and cones.

Its subcellular location is the endoplasmic reticulum membrane. The catalysed reaction is all-trans-retinol + NADP(+) = all-trans-retinal + NADPH + H(+). It carries out the reaction 11-cis-retinol + NADP(+) = 11-cis-retinal + NADPH + H(+). It catalyses the reaction 9-cis-retinol + NADP(+) = 9-cis-retinal + NADPH + H(+). The enzyme catalyses 13-cis-retinol + NADP(+) = 13-cis-retinal + NADPH + H(+). The catalysed reaction is a medium-chain primary fatty alcohol + NADP(+) = a medium-chain fatty aldehyde + NADPH + H(+). It carries out the reaction (2E,6Z)-nona-2,6-dien-1-ol + NADP(+) = (2E,6Z)-nona-2,6-dienal + NADPH + H(+). It catalyses the reaction (E)-oct-2-en-1-ol + NADP(+) = (2E)-octenal + NADPH + H(+). The enzyme catalyses (E)-non-2-en-1-ol + NADP(+) = (E)-non-2-enal + NADPH + H(+). The catalysed reaction is heptan-1-ol + NADP(+) = heptanal + NADPH + H(+). It carries out the reaction hexan-1-ol + NADP(+) = hexanal + NADPH + H(+). It catalyses the reaction decan-1-ol + NADP(+) = decanal + NADPH + H(+). The enzyme catalyses nonan-1-ol + NADP(+) = nonanal + NADPH + H(+). The catalysed reaction is octan-1-ol + NADP(+) = octanal + NADPH + H(+). It carries out the reaction (Z)-non-6-en-1-ol + NADP(+) = (Z)-non-6-enal + NADPH + H(+). It participates in cofactor metabolism; retinol metabolism. Retinol dehydrogenase with a clear preference for NADP. Displays high activity towards 9-cis, 11-cis and all-trans-retinol, and to a lesser extent on 13-cis-retinol. Also exhibits reductive activity towards toxic lipid peroxidation products such as medium-chain aldehydes trans-2-nonenal, nonanal, and cis-6-nonenal. Has no dehydrogenase activity towards steroid. Seems to be required for homeostasis of retinol in liver and testis. The chain is Retinol dehydrogenase 11 (Rdh11) from Mus musculus (Mouse).